The following is a 483-amino-acid chain: E3 ubiquitin-protein ligase TRIM50 (483 aa).

The RING-type zinc-finger motif lies at 16–57 (CPICLEVFKEPLMLQCGHSYCKNCLDSLSEHLDSELRCPVCR). Residues 84–125 (TEPTVCVHHRNPLSLFCEKDQEFICGLCGLLGSHQHHRVTPV) form a B box-type zinc finger. 4 residues coordinate Zn(2+): cysteine 89, histidine 92, cysteine 111, and histidine 117. Coiled coils occupy residues 127–169 (TVYS…NESD) and 203–236 (GLVASLDMQLEQAQGTQERLAQAERVLEQFGNES). Residues 275-474 (DIKLTVWKRL…LPMVLPPPSA (200 aa)) form the B30.2/SPRY domain. The residue at position 372 (lysine 372) is an N6-acetyllysine.

It belongs to the TRIM/RBCC family. In terms of assembly, can form dimers and trimers. Interacts with several E2 ubiquitin-conjugating enzymes, including UBE2L6, UBE2E1, UBE2E3. No interaction with UBE2H. Interacts with BECN1. Interacts with SQSTM1. Interacts with NLRP3. Post-translationally, auto-ubiquitinated. Acetylated by EP300 and KAT2B. HDAC6 drives TRIM50 deacetylation. Acetylation antagonizes with TRIM50 ubiquitination.

The protein localises to the cytoplasm. It carries out the reaction S-ubiquitinyl-[E2 ubiquitin-conjugating enzyme]-L-cysteine + [acceptor protein]-L-lysine = [E2 ubiquitin-conjugating enzyme]-L-cysteine + N(6)-ubiquitinyl-[acceptor protein]-L-lysine.. In terms of biological role, E3 ubiquitin-protein ligase that ubiquitinates Beclin-1/BECN1 in a 'Lys-63'-dependent manner enhancing its binding to ULK1. In turn, promotes starvation-induced autophagy activation. Also interacts with p62/SQSTM1 protein and thereby induces the formation and the autophagy clearance of aggresome-associated polyubiquitinated proteins through HDAC6 interaction. Also promotes NLRP3 inflammasome activation by directly inducing NLRP3 oligomerization independent of its E3 ligase function. The chain is E3 ubiquitin-protein ligase TRIM50 (Trim50) from Rattus norvegicus (Rat).